The following is a 259-amino-acid chain: Aminoglycoside 3'-phosphotransferase (259 aa).

Catalysis depends on Asp187, which acts as the Proton acceptor.

It belongs to the aminoglycoside phosphotransferase family.

It catalyses the reaction kanamycin A + ATP = kanamycin 3'-phosphate + ADP + H(+). Resistance to kanamycin and structurally-related aminoglycosides, including amikacin. This is Aminoglycoside 3'-phosphotransferase (aphA-6) from Acinetobacter baumannii.